We begin with the raw amino-acid sequence, 216 residues long: MQLPFPVAQDPDQHSLEKGRLLFAGDTEFVKGVVAMSGLPDPDRLEVCFAGRSNVGKSSLINALTGRKGLARASNTPGRTQEINFFTAGESHYLVDLPGYGYANAPVPVVEKWQRLLKQYLSGRQTLRRAFVLIDARHGVKKVDEEILSLLDSAAVTFQVVLTKADKVKEKEREKVLDQVRTALSKHPAAFPELVITSSEKGWGIPTLRSIITDLT.

Residues 43–216 (DRLEVCFAGR…TLRSIITDLT (174 aa)) form the EngB-type G domain. Residues 51–58 (GRSNVGKS), 78–82 (GRTQE), 96–99 (DLPG), 163–166 (TKAD), and 197–199 (TSS) each bind GTP. Mg(2+) contacts are provided by Ser-58 and Thr-80.

The protein belongs to the TRAFAC class TrmE-Era-EngA-EngB-Septin-like GTPase superfamily. EngB GTPase family. The cofactor is Mg(2+).

In terms of biological role, necessary for normal cell division and for the maintenance of normal septation. The sequence is that of Probable GTP-binding protein EngB from Roseobacter denitrificans (strain ATCC 33942 / OCh 114) (Erythrobacter sp. (strain OCh 114)).